Consider the following 470-residue polypeptide: Argininosuccinate lyase (470 aa).

It belongs to the lyase 1 family. Argininosuccinate lyase subfamily.

Its subcellular location is the cytoplasm. The enzyme catalyses 2-(N(omega)-L-arginino)succinate = fumarate + L-arginine. It functions in the pathway amino-acid biosynthesis; L-arginine biosynthesis; L-arginine from L-ornithine and carbamoyl phosphate: step 3/3. This chain is Argininosuccinate lyase, found in Mycobacterium tuberculosis (strain CDC 1551 / Oshkosh).